We begin with the raw amino-acid sequence, 347 residues long: Serpentine receptor class beta-2 (347 aa).

7 helical membrane passes run 27 to 47 (IAQL…YIFL), 62 to 82 (FLLV…AFLF), 108 to 128 (GNLS…GFSI), 146 to 166 (FLGP…LYHV), 194 to 214 (FWEL…FLLV), 246 to 266 (LIVS…TIFV), and 288 to 308 (ITVP…LSFM).

Belongs to the nematode receptor-like protein srb family.

Its subcellular location is the membrane. This Caenorhabditis elegans protein is Serpentine receptor class beta-2 (srb-2).